A 380-amino-acid polypeptide reads, in one-letter code: Probable inactive reductase easA (380 aa).

FMN is bound by residues 25–27 (PMT), A60, Q102, and H171. H171 and N174 together coordinate substrate. FMN is bound by residues K223, G299, 324 to 325 (GR), and R325. Y352 is a substrate binding site.

It belongs to the NADH:flavin oxidoreductase/NADH oxidase family.

Functionally, probable inactive dehydrogenase; part of the gene cluster that mediates the biosynthesis of fungal ergot alkaloid ergovaline, the predominant ergopeptine product in E.festucae var. lolii. DmaW catalyzes the first step of ergot alkaloid biosynthesis by condensing dimethylallyl diphosphate (DMAP) and tryptophan to form 4-dimethylallyl-L-tryptophan. The second step is catalyzed by the methyltransferase easF that methylates 4-dimethylallyl-L-tryptophan in the presence of S-adenosyl-L-methionine, resulting in the formation of 4-dimethylallyl-L-abrine. The catalase easC and the FAD-dependent oxidoreductase easE then transform 4-dimethylallyl-L-abrine to chanoclavine-I which is further oxidized by easD in the presence of NAD(+), resulting in the formation of chanoclavine-I aldehyde. Agroclavine dehydrogenase easG then mediates the conversion of chanoclavine-I aldehyde to agroclavine via a non-enzymatic adduct reaction: the substrate is an iminium intermediate that is formed spontaneously from chanoclavine-I aldehyde in the presence of glutathione. The presence of easA is not required to complete this reaction. Further conversion of agroclavine to paspalic acid is a two-step process involving oxidation of agroclavine to elymoclavine and of elymoclavine to paspalic acid, the second step being performed by the elymoclavine oxidase cloA. Paspalic acid is then further converted to D-lysergic acid. Ergovaline is assembled from D-lysergic acid and three different amino acids by the D-lysergyl-peptide-synthetase composed of a monomudular (lpsB) and a trimodular (lpsA) nonribosomal peptide synthetase subunit. In Epichloe festucae var. lolii (Neotyphodium lolii), this protein is Probable inactive reductase easA.